A 380-amino-acid polypeptide reads, in one-letter code: Queuine tRNA-ribosyltransferase (380 aa).

Catalysis depends on D89, which acts as the Proton acceptor. Substrate is bound by residues 89-93 (DSGGF), D143, Q187, and G214. An RNA binding region spans residues 245–251 (GVGKPED). The active-site Nucleophile is the D264. The interval 269–273 (TRNAR) is RNA binding; important for wobble base 34 recognition. Zn(2+) is bound by residues C302, C304, C307, and H333.

This sequence belongs to the queuine tRNA-ribosyltransferase family. As to quaternary structure, homodimer. Within each dimer, one monomer is responsible for RNA recognition and catalysis, while the other monomer binds to the replacement base PreQ1. Zn(2+) is required as a cofactor.

It catalyses the reaction 7-aminomethyl-7-carbaguanine + guanosine(34) in tRNA = 7-aminomethyl-7-carbaguanosine(34) in tRNA + guanine. Its pathway is tRNA modification; tRNA-queuosine biosynthesis. In terms of biological role, catalyzes the base-exchange of a guanine (G) residue with the queuine precursor 7-aminomethyl-7-deazaguanine (PreQ1) at position 34 (anticodon wobble position) in tRNAs with GU(N) anticodons (tRNA-Asp, -Asn, -His and -Tyr). Catalysis occurs through a double-displacement mechanism. The nucleophile active site attacks the C1' of nucleotide 34 to detach the guanine base from the RNA, forming a covalent enzyme-RNA intermediate. The proton acceptor active site deprotonates the incoming PreQ1, allowing a nucleophilic attack on the C1' of the ribose to form the product. After dissociation, two additional enzymatic reactions on the tRNA convert PreQ1 to queuine (Q), resulting in the hypermodified nucleoside queuosine (7-(((4,5-cis-dihydroxy-2-cyclopenten-1-yl)amino)methyl)-7-deazaguanosine). The protein is Queuine tRNA-ribosyltransferase of Proteus mirabilis (strain HI4320).